The following is a 61-amino-acid chain: Sodium/potassium-transporting ATPase subunit gamma (61 aa).

Residues 24-44 (KGGLIFAAIAFVVGMLIIFSG) form a helical membrane-spanning segment.

Belongs to the FXYD family. Regulatory subunit of the sodium/potassium-transporting ATPase which is composed of a catalytic alpha subunit, an auxiliary non-catalytic beta subunit and an additional regulatory subunit.

Its subcellular location is the membrane. Its function is as follows. May be involved in forming the receptor site for cardiac glycoside binding or may modulate the transport function of the sodium ATPase. The sequence is that of Sodium/potassium-transporting ATPase subunit gamma (fxyd2) from Xenopus laevis (African clawed frog).